The following is a 272-amino-acid chain: MADS-box transcription factor 58 (272 aa).

The interval 1–41 (MHIYKEQEAEPSTGLMMPEPAPVASPGSGGSGGSGSVGAEK) is disordered. Gly residues predominate over residues 27 to 36 (GSGGSGGSGS). The 61-residue stretch at 43-103 (GSRGKIEIKR…GRLYEYSNNS (61 aa)) folds into the MADS-box domain. The K-box domain maps to 129 to 219 (AQHYQQEAAK…KSKVAESERG (91 aa)).

Expressed in the lodicule, stamen carpel and ovule primordia.

It localises to the nucleus. Probable transcription factor involved in the development of floral organs. Acts as a C-class protein in association with MADS3. Involved in the control of lodicule number (whorl 2), stamen specification (whorl 3), floral meristem determinacy and regulation of the carpel morphogenesis (whorl 4). Plays a more predominant role in floral meristem determinacy than MADS3. The protein is MADS-box transcription factor 58 (MADS58) of Oryza sativa subsp. japonica (Rice).